The sequence spans 776 residues: Glutathione biosynthesis bifunctional protein GshAB (776 aa).

The tract at residues 1–354 (MIKLDMTILD…QLADENENNI (354 aa)) is glutamate--cysteine ligase. One can recognise an ATP-grasp domain in the interval 521–775 (KLVLAENNIR…IGDKILDFLF (255 aa)). ATP is bound at residue 548–606 (SLFKDKQIVVKPKSTNYGWGISIFKNKFTTEDYQEALNIAFSYDSSVIIEEFIPGDEFR). Mg(2+) is bound by residues Asp-728, Glu-745, and Asn-747. Positions 728, 745, and 747 each coordinate Mn(2+).

The protein in the N-terminal section; belongs to the glutamate--cysteine ligase type 1 family. Type 2 subfamily. In terms of assembly, monomer. Mg(2+) serves as cofactor. Mn(2+) is required as a cofactor.

The catalysed reaction is L-cysteine + L-glutamate + ATP = gamma-L-glutamyl-L-cysteine + ADP + phosphate + H(+). It catalyses the reaction gamma-L-glutamyl-L-cysteine + glycine + ATP = glutathione + ADP + phosphate + H(+). The protein operates within sulfur metabolism; glutathione biosynthesis; glutathione from L-cysteine and L-glutamate: step 1/2. It functions in the pathway sulfur metabolism; glutathione biosynthesis; glutathione from L-cysteine and L-glutamate: step 2/2. Synthesizes glutathione from L-glutamate and L-cysteine via gamma-L-glutamyl-L-cysteine. The sequence is that of Glutathione biosynthesis bifunctional protein GshAB from Listeria welshimeri serovar 6b (strain ATCC 35897 / DSM 20650 / CCUG 15529 / CIP 8149 / NCTC 11857 / SLCC 5334 / V8).